We begin with the raw amino-acid sequence, 269 residues long: Pertussis toxin subunit 1 (269 aa).

The N-terminal stretch at 1 to 34 (MRCTRAIRQTARTGWLTWLAILAVTAPVTSPAWA) is a signal peptide. Residue tryptophan 60 coordinates NAD(+). Residues histidine 69 and glutamate 163 contribute to the active site. A disulfide bridge connects residues cysteine 75 and cysteine 235.

This sequence belongs to the bacterial exotoxin subunit A family. In terms of assembly, pertussis toxin contains five different chains, S1-S5. They are organized into 2 functional subunits: A, composed of S1 (which is toxic) and B, containing S2, S3, S5, and two copies of S4 (B binds to the membrane receptors). Dimers of S2-S4 and S3-S4 are held together by S5.

The protein resides in the secreted. S1 is an NAD-dependent ADP-ribosyltransferase, which plays a crucial role in the pathogenesis of B.pertussis causing disruption of normal host cellular regulation. It catalyzes the ADP-ribosylation of a cysteine in the alpha subunit of host heterotrimeric G proteins. In the absence of G proteins it also catalyzes the cleavage of NAD(+) into ADP-ribose and nicotinamide. It irreversibly uncouples the G-alpha GTP-binding proteins from their membrane receptors. This is Pertussis toxin subunit 1 (ptxA) from Bordetella pertussis (strain Tohama I / ATCC BAA-589 / NCTC 13251).